The chain runs to 545 residues: T-complex protein 1 subunit gamma (545 aa).

N-acetylmethionine is present on Met-1. The interval 1-24 (MMGHRPVLVLSQNTKRESGRKVQS) is disordered. Ser-11 is modified (phosphoserine). Residue Lys-15 forms a Glycyl lysine isopeptide (Lys-Gly) (interchain with G-Cter in SUMO2) linkage. An ADP-binding site is contributed by Gly-42. Gly-42 contributes to the ATP binding site. Asp-93 contacts Mg(2+). ADP-binding residues include Gly-94, Thr-95, Thr-96, Ser-97, Thr-162, and Lys-163. ATP is bound by residues Gly-94, Thr-95, and Thr-96. The residue at position 170 (Ser-170) is a Phosphoserine. Lys-222 bears the N6-acetyllysine mark. 2 positions are modified to phosphoserine: Ser-243 and Ser-244. Tyr-247 is subject to Phosphotyrosine. Glycyl lysine isopeptide (Lys-Gly) (interchain with G-Cter in SUMO2) cross-links involve residues Lys-248 and Lys-249. The residue at position 252 (Ser-252) is a Phosphoserine. Cys-366 and Cys-372 are joined by a disulfide. Lys-381 is covalently cross-linked (Glycyl lysine isopeptide (Lys-Gly) (interchain with G-Cter in SUMO2)). Residue Gly-411 coordinates ADP. An ATP-binding site is contributed by Gly-411. Phosphothreonine is present on residues Thr-430 and Thr-459. ADP-binding residues include Gly-482, Glu-483, Glu-497, and Lys-502. Gly-482 contributes to the ATP binding site. Residue Glu-497 participates in ATP binding. Residues 526-545 (HKKKGDDQNRQTGAPDAGQE) are disordered.

It belongs to the TCP-1 chaperonin family. In terms of assembly, component of the chaperonin-containing T-complex (TRiC), a hexadecamer composed of two identical back-to-back stacked rings enclosing a protein folding chamber. Each ring is made up of eight different subunits: TCP1/CCT1, CCT2, CCT3, CCT4, CCT5, CCT6A/CCT6, CCT7, CCT8. Interacts with PACRG. Interacts with DNAAF4. Interacts with DLEC1. The N-terminus is blocked.

It is found in the cytoplasm. It catalyses the reaction ATP + H2O = ADP + phosphate + H(+). Its function is as follows. Component of the chaperonin-containing T-complex (TRiC), a molecular chaperone complex that assists the folding of actin, tubulin and other proteins upon ATP hydrolysis. The TRiC complex mediates the folding of WRAP53/TCAB1, thereby regulating telomere maintenance. As part of the TRiC complex may play a role in the assembly of BBSome, a complex involved in ciliogenesis regulating transports vesicles to the cilia. In Mus musculus (Mouse), this protein is T-complex protein 1 subunit gamma (Cct3).